Consider the following 146-residue polypeptide: Large ribosomal subunit protein uL15 (146 aa).

Positions 1 to 59 are disordered; sequence MRLEELKAPAGANKRTKRVGRGTGSGHGKTSTRGHKGQKSRSGGGVRPGFEGGQMPLQR. The segment covering 30 to 39 has biased composition (basic residues); that stretch reads TSTRGHKGQK. The segment covering 42–52 has biased composition (gly residues); the sequence is SGGGVRPGFEG.

This sequence belongs to the universal ribosomal protein uL15 family. In terms of assembly, part of the 50S ribosomal subunit.

Functionally, binds to the 23S rRNA. The polypeptide is Large ribosomal subunit protein uL15 (Syntrophomonas wolfei subsp. wolfei (strain DSM 2245B / Goettingen)).